The sequence spans 484 residues: Probable cytosol aminopeptidase (484 aa).

Residues Lys-256 and Asp-261 each contribute to the Mn(2+) site. The active site involves Lys-268. The Mn(2+) site is built by Asp-279, Asp-338, and Glu-340. The active site involves Arg-342.

It belongs to the peptidase M17 family. The cofactor is Mn(2+).

It localises to the cytoplasm. It carries out the reaction Release of an N-terminal amino acid, Xaa-|-Yaa-, in which Xaa is preferably Leu, but may be other amino acids including Pro although not Arg or Lys, and Yaa may be Pro. Amino acid amides and methyl esters are also readily hydrolyzed, but rates on arylamides are exceedingly low.. The catalysed reaction is Release of an N-terminal amino acid, preferentially leucine, but not glutamic or aspartic acids.. Its function is as follows. Presumably involved in the processing and regular turnover of intracellular proteins. Catalyzes the removal of unsubstituted N-terminal amino acids from various peptides. This chain is Probable cytosol aminopeptidase, found in Actinobacillus succinogenes (strain ATCC 55618 / DSM 22257 / CCUG 43843 / 130Z).